The following is a 590-amino-acid chain: Enhancer of polycomb-like protein 1 (590 aa).

Disordered regions lie at residues 302-335 and 471-497; these read DEDL…PVRS and TPPR…EPPV. Positions 475-488 are enriched in basic and acidic residues; it reads ELGEDRSDRWKYDS.

The protein belongs to the enhancer of polycomb family. Component of the NuA4 histone acetyltransferase complex.

The protein resides in the nucleus. Component of the NuA4 histone acetyltransferase complex which is involved in transcriptional activation of selected genes principally by acetylation of nucleosomal histone H4 and H2A. The NuA4 complex is also involved in DNA repair. Involved in gene silencing by neighboring heterochromatin, blockage of the silencing spreading along the chromosome, and required for cell cycle progression through G2/M. In Gibberella zeae (strain ATCC MYA-4620 / CBS 123657 / FGSC 9075 / NRRL 31084 / PH-1) (Wheat head blight fungus), this protein is Enhancer of polycomb-like protein 1 (EPL1).